A 133-amino-acid polypeptide reads, in one-letter code: Ribosome-binding factor A (133 aa).

It belongs to the RbfA family. Monomer. Binds 30S ribosomal subunits, but not 50S ribosomal subunits or 70S ribosomes.

The protein localises to the cytoplasm. Its function is as follows. One of several proteins that assist in the late maturation steps of the functional core of the 30S ribosomal subunit. Associates with free 30S ribosomal subunits (but not with 30S subunits that are part of 70S ribosomes or polysomes). Required for efficient processing of 16S rRNA. May interact with the 5'-terminal helix region of 16S rRNA. The polypeptide is Ribosome-binding factor A (Acinetobacter baumannii (strain AB307-0294)).